The chain runs to 109 residues: UPF0122 protein BH2485 (109 aa).

This sequence belongs to the UPF0122 family.

Its function is as follows. Might take part in the signal recognition particle (SRP) pathway. This is inferred from the conservation of its genetic proximity to ftsY/ffh. May be a regulatory protein. In Halalkalibacterium halodurans (strain ATCC BAA-125 / DSM 18197 / FERM 7344 / JCM 9153 / C-125) (Bacillus halodurans), this protein is UPF0122 protein BH2485.